We begin with the raw amino-acid sequence, 451 residues long: Coproporphyrinogen III oxidase (451 aa).

FAD contacts are provided by residues 10–15 (GGGISG), 36–37 (DP), 58–61 (GAEA), Val-242, Trp-393, and 429–431 (IGV).

It belongs to the protoporphyrinogen/coproporphyrinogen oxidase family. Coproporphyrinogen III oxidase subfamily. FAD serves as cofactor.

It is found in the cytoplasm. The enzyme catalyses coproporphyrinogen III + 3 O2 = coproporphyrin III + 3 H2O2. It participates in porphyrin-containing compound metabolism; protoheme biosynthesis. Involved in coproporphyrin-dependent heme b biosynthesis. Catalyzes the oxidation of coproporphyrinogen III to coproporphyrin III. This is Coproporphyrinogen III oxidase from Mycobacterium leprae (strain TN).